We begin with the raw amino-acid sequence, 142 residues long: Peptide methionine sulfoxide reductase MsrB (142 aa).

One can recognise a MsrB domain in the interval 2–125 (LKKDKSELTD…NSAAIQFIPY (124 aa)). Cys114 serves as the catalytic Nucleophile.

The protein belongs to the MsrB Met sulfoxide reductase family.

The catalysed reaction is L-methionyl-[protein] + [thioredoxin]-disulfide + H2O = L-methionyl-(R)-S-oxide-[protein] + [thioredoxin]-dithiol. This is Peptide methionine sulfoxide reductase MsrB from Staphylococcus aureus (strain bovine RF122 / ET3-1).